A 94-amino-acid chain; its full sequence is uncharacterized protein (94 aa).

This is an uncharacterized protein from Saccharolobus islandicus (Sulfolobus islandicus).